A 76-amino-acid chain; its full sequence is Small ribosomal subunit protein bS18 (76 aa).

Belongs to the bacterial ribosomal protein bS18 family. In terms of assembly, part of the 30S ribosomal subunit. Forms a tight heterodimer with protein bS6.

Binds as a heterodimer with protein bS6 to the central domain of the 16S rRNA, where it helps stabilize the platform of the 30S subunit. This is Small ribosomal subunit protein bS18 from Carboxydothermus hydrogenoformans (strain ATCC BAA-161 / DSM 6008 / Z-2901).